The chain runs to 424 residues: Subtilisin-like protease 2 (424 aa).

A signal peptide spans 1–17 (MQLLNLGLLLLLPFVAG). Residues 18-123 (EIAPQPEPLR…VHPDQHVYLA (106 aa)) constitute a propeptide that is removed on maturation. The region spanning 37 to 123 (QYIVTLKEGL…VHPDQHVYLA (87 aa)) is the Inhibitor I9 domain. The 293-residue stretch at 132–424 (RWGLGYMSSK…RKFTLPKNTK (293 aa)) folds into the Peptidase S8 domain. Catalysis depends on charge relay system residues D170 and H202. N-linked (GlcNAc...) asparagine glycans are attached at residues N249, N262, and N350. S359 acts as the Charge relay system in catalysis. N-linked (GlcNAc...) asparagine glycosylation is present at N390.

It belongs to the peptidase S8 family.

It is found in the secreted. In terms of biological role, secreted subtilisin-like serine protease with keratinolytic activity that contributes to pathogenicity. The protein is Subtilisin-like protease 2 (SUB2) of Arthroderma otae (Microsporum canis).